Consider the following 488-residue polypeptide: 3-octaprenyl-4-hydroxybenzoate carboxy-lyase (488 aa).

Asparagine 172 contacts Mn(2+). Prenylated FMN is bound by residues 175–177 (IYR), 189–191 (RWL), and 194–195 (RG). Glutamate 238 contacts Mn(2+). Aspartate 287 (proton donor) is an active-site residue.

It belongs to the UbiD family. As to quaternary structure, homohexamer. Requires prenylated FMN as cofactor. The cofactor is Mn(2+).

The protein localises to the cell membrane. The catalysed reaction is a 4-hydroxy-3-(all-trans-polyprenyl)benzoate + H(+) = a 2-(all-trans-polyprenyl)phenol + CO2. The protein operates within cofactor biosynthesis; ubiquinone biosynthesis. Its function is as follows. Catalyzes the decarboxylation of 3-octaprenyl-4-hydroxy benzoate to 2-octaprenylphenol, an intermediate step in ubiquinone biosynthesis. In Pseudomonas putida (strain ATCC 47054 / DSM 6125 / CFBP 8728 / NCIMB 11950 / KT2440), this protein is 3-octaprenyl-4-hydroxybenzoate carboxy-lyase.